Reading from the N-terminus, the 67-residue chain is Probable Sec-independent protein translocase protein TatE (67 aa).

The chain crosses the membrane as a helical span at residues 4-21 (ISITKLLVVAALVVLLFG). The segment at 46–67 (EDAGAKKEAGGDIQAEKLSHKE) is disordered.

The protein belongs to the TatA/E family. TatE subfamily.

It is found in the cell inner membrane. Functionally, part of the twin-arginine translocation (Tat) system that transports large folded proteins containing a characteristic twin-arginine motif in their signal peptide across membranes. TatE shares overlapping functions with TatA. The sequence is that of Probable Sec-independent protein translocase protein TatE from Citrobacter koseri (strain ATCC BAA-895 / CDC 4225-83 / SGSC4696).